The chain runs to 98 residues: Large ribosomal subunit protein uL23 (98 aa).

Belongs to the universal ribosomal protein uL23 family. In terms of assembly, part of the 50S ribosomal subunit. Contacts protein L29, and trigger factor when it is bound to the ribosome.

In terms of biological role, one of the early assembly proteins it binds 23S rRNA. One of the proteins that surrounds the polypeptide exit tunnel on the outside of the ribosome. Forms the main docking site for trigger factor binding to the ribosome. The chain is Large ribosomal subunit protein uL23 from Nitrobacter winogradskyi (strain ATCC 25391 / DSM 10237 / CIP 104748 / NCIMB 11846 / Nb-255).